A 928-amino-acid chain; its full sequence is 2-oxoglutarate dehydrogenase E1 component (928 aa).

Belongs to the alpha-ketoglutarate dehydrogenase family. As to quaternary structure, homodimer. Part of the 2-oxoglutarate dehydrogenase (OGDH) complex composed of E1 (2-oxoglutarate dehydrogenase), E2 (dihydrolipoamide succinyltransferase) and E3 (dihydrolipoamide dehydrogenase); the complex contains multiple copies of the three enzymatic components (E1, E2 and E3). The cofactor is thiamine diphosphate.

The enzyme catalyses N(6)-[(R)-lipoyl]-L-lysyl-[protein] + 2-oxoglutarate + H(+) = N(6)-[(R)-S(8)-succinyldihydrolipoyl]-L-lysyl-[protein] + CO2. Functionally, E1 component of the 2-oxoglutarate dehydrogenase (OGDH) complex which catalyzes the decarboxylation of 2-oxoglutarate, the first step in the conversion of 2-oxoglutarate to succinyl-CoA and CO(2). The sequence is that of 2-oxoglutarate dehydrogenase E1 component (sucA) from Rickettsia conorii (strain ATCC VR-613 / Malish 7).